Reading from the N-terminus, the 351-residue chain is DNA polymerase IV (351 aa).

In terms of domain architecture, UmuC spans Ile4 to Gly185. 2 residues coordinate Mg(2+): Asp8 and Asp103. The active site involves Glu104.

Belongs to the DNA polymerase type-Y family. Monomer. Requires Mg(2+) as cofactor.

It localises to the cytoplasm. The enzyme catalyses DNA(n) + a 2'-deoxyribonucleoside 5'-triphosphate = DNA(n+1) + diphosphate. Poorly processive, error-prone DNA polymerase involved in untargeted mutagenesis. Copies undamaged DNA at stalled replication forks, which arise in vivo from mismatched or misaligned primer ends. These misaligned primers can be extended by PolIV. Exhibits no 3'-5' exonuclease (proofreading) activity. May be involved in translesional synthesis, in conjunction with the beta clamp from PolIII. The chain is DNA polymerase IV from Salmonella paratyphi B (strain ATCC BAA-1250 / SPB7).